A 666-amino-acid chain; its full sequence is tRNA 5-methylaminomethyl-2-thiouridine biosynthesis bifunctional protein MnmC (666 aa).

Residues 1 to 245 are tRNA (mnm(5)s(2)U34)-methyltransferase; the sequence is MKQYAIQPAT…KREMLCGVME (245 aa). Positions 270 to 666 are FAD-dependent cmnm(5)s(2)U34 oxidoreductase; it reads IGGGIASALL…RKLLKGKAVK (397 aa).

The protein in the N-terminal section; belongs to the methyltransferase superfamily. tRNA (mnm(5)s(2)U34)-methyltransferase family. It in the C-terminal section; belongs to the DAO family. It depends on FAD as a cofactor.

It localises to the cytoplasm. The enzyme catalyses 5-aminomethyl-2-thiouridine(34) in tRNA + S-adenosyl-L-methionine = 5-methylaminomethyl-2-thiouridine(34) in tRNA + S-adenosyl-L-homocysteine + H(+). Functionally, catalyzes the last two steps in the biosynthesis of 5-methylaminomethyl-2-thiouridine (mnm(5)s(2)U) at the wobble position (U34) in tRNA. Catalyzes the FAD-dependent demodification of cmnm(5)s(2)U34 to nm(5)s(2)U34, followed by the transfer of a methyl group from S-adenosyl-L-methionine to nm(5)s(2)U34, to form mnm(5)s(2)U34. This is tRNA 5-methylaminomethyl-2-thiouridine biosynthesis bifunctional protein MnmC from Salmonella paratyphi B (strain ATCC BAA-1250 / SPB7).